The following is a 365-amino-acid chain: Protein BZR1 homolog 2 (365 aa).

Over residues 1–30 (MATGGGGGGGGMGGGGVGGGAGAAGVGVGG) the composition is skewed to gly residues. 4 disordered regions span residues 1-45 (MATG…KRRE), 113-154 (SPSP…NMAN), 191-236 (SAPV…TPPS), and 344-365 (HEDS…RAAA). Positions 31-113 (RMPTWREREN…RMEVIGCSVS (83 aa)) are required for DNA-binding. Low complexity predominate over residues 113–144 (SPSPCSSYQPSPRASYNASPTSSSFPSGASSP). 2 stretches are compositionally biased toward polar residues: residues 215-233 (SNVQ…VNST) and 356-365 (LGSSRTRAAA).

The protein belongs to the BZR/LAT61 family. As to quaternary structure, interacts with PUB24.

Its function is as follows. May function in brassinosteroid signaling. The protein is Protein BZR1 homolog 2 of Oryza sativa subsp. japonica (Rice).